A 283-amino-acid chain; its full sequence is Phospholipase C (283 aa).

Positions 1–24 are cleaved as a signal peptide; the sequence is MKKKVLALGAAITLVAPLQSVAFA. A propeptide spanning residues 25–38 is cleaved from the precursor; it reads HENDGGQRFGVIPR. 9 residues coordinate Zn(2+): tryptophan 39, histidine 52, aspartate 93, histidine 107, histidine 156, aspartate 160, histidine 166, histidine 180, and glutamate 184. Positions 39–283 constitute a Zn-dependent PLC domain; that stretch reads WSAEDKHKEG…QLWFDTYGNR (245 aa).

This sequence belongs to the bacterial zinc-metallophospholipase C family. Monomer. The cofactor is Zn(2+).

The enzyme catalyses a 1,2-diacyl-sn-glycero-3-phosphocholine + H2O = phosphocholine + a 1,2-diacyl-sn-glycerol + H(+). Functionally, required, with sphingomyelinase, to effect target cell lysis (hemolysis). This is Phospholipase C (cerA) from Bacillus cereus.